A 150-amino-acid polypeptide reads, in one-letter code: Bis(5'-adenosyl)-triphosphatase (150 aa).

An HIT domain is found at 2–109; the sequence is SFRFGQHLIK…LPRKAGDFPR (108 aa). Residues H8, N27, Q83, and 89–92 each bind substrate; that span reads GQTV. A Histidine triad motif motif is present at residues 94–98; that stretch reads HVHVH. The active-site Tele-AMP-histidine intermediate is the H96. H98 lines the substrate pocket. Y114 bears the Phosphotyrosine; by SRC mark. At Y147 the chain carries Phosphotyrosine.

In terms of assembly, homodimer. Interacts with UBE2I. Interacts with MDM2. Interacts with CTNNB1. Identified in a complex with CTNNB1 and LEF1. Post-translationally, phosphorylation at Tyr-114 by SRC is required for induction of apoptosis. As to expression, expressed in heart, brain, lung and skeletal muscle. Particularly strong expression in liver, testis and kidney, where it is confined to the tubular epithelium.

It is found in the cytoplasm. Its subcellular location is the nucleus. It localises to the mitochondrion. It catalyses the reaction P(1),P(3)-bis(5'-adenosyl) triphosphate + H2O = AMP + ADP + 2 H(+). The catalysed reaction is adenosine 5'-phosphosulfate + H2O = sulfate + AMP + 2 H(+). It carries out the reaction adenosine 5'-phosphosulfate + NH4(+) = adenosine 5'-phosphoramidate + sulfate + 2 H(+). The enzyme catalyses adenosine 5'-phosphoramidate + H2O = AMP + NH4(+). In terms of biological role, possesses dinucleoside triphosphate hydrolase activity. Cleaves P(1)-P(3)-bis(5'-adenosyl) triphosphate (Ap3A) to yield AMP and ADP. Can also hydrolyze P(1)-P(4)-bis(5'-adenosyl) tetraphosphate (Ap4A), but has extremely low activity with ATP. Exhibits adenylylsulfatase activity, hydrolyzing adenosine 5'-phosphosulfate to yield AMP and sulfate. Exhibits adenosine 5'-monophosphoramidase activity, hydrolyzing purine nucleotide phosphoramidates with a single phosphate group such as adenosine 5'monophosphoramidate (AMP-NH2) to yield AMP and NH2. Exhibits adenylylsulfate-ammonia adenylyltransferase, catalyzing the ammonolysis of adenosine 5'-phosphosulfate resulting in the formation of adenosine 5'-phosphoramidate. Also catalyzes the ammonolysis of adenosine 5-phosphorofluoridate and diadenosine triphosphate. Modulates transcriptional activation by CTNNB1 and thereby contributes to regulate the expression of genes essential for cell proliferation and survival, such as CCND1 and BIRC5. Plays a role in the induction of apoptosis via SRC and AKT1 signaling pathways. Inhibits MDM2-mediated proteasomal degradation of p53/TP53 and thereby plays a role in p53/TP53-mediated apoptosis. Induction of apoptosis depends on the ability of FHIT to bind P(1)-P(3)-bis(5'-adenosyl) triphosphate or related compounds, but does not require its catalytic activity. Functions as a tumor suppressor. The protein is Bis(5'-adenosyl)-triphosphatase (Fhit) of Mus musculus (Mouse).